Reading from the N-terminus, the 619-residue chain is Sodium-coupled monocarboxylate transporter 2 (619 aa).

The Extracellular portion of the chain corresponds to 1-9; that stretch reads MRVKNFEAW. The helical transmembrane segment at 10–30 threads the bilayer; that stretch reads DYVVFAGLFVISSGIGVFFAI. At 31–47 the chain is on the cytoplasmic side; sequence KERKKTTSREFLVGGRQ. Residues 48-68 traverse the membrane as a helical segment; it reads MSFGPVALSLTASFMSAVTVL. Residues 69 to 80 lie on the Extracellular side of the membrane; that stretch reads GTPAEVYRFGAS. The helical transmembrane segment at 81–101 threads the bilayer; sequence FFLFLISYVFVVFFTSELFLP. Over 102–128 the chain is Cytoplasmic; the sequence is VFYRSGITSTYEYLQLRFNKPVRYAAT. Residues 129-149 form a helical membrane-spanning segment; the sequence is IIYIVQTILYTGVVVYAPALA. The Extracellular segment spans residues 150–157; it reads LNQVTGFN. The helical transmembrane segment at 158–178 threads the bilayer; sequence LWASVFATGIVCTFYCSLGGL. Residues 179-180 are Cytoplasmic-facing; that stretch reads KA. The helical transmembrane segment at 181 to 201 threads the bilayer; sequence VVWTDAFQMVVMIVGFLTVLI. The Extracellular segment spans residues 202–235; it reads QGSNHVGGFNNVLEKAGNGSRLHIVDFDVDPLRR. Asn-219 carries N-linked (GlcNAc...) asparagine glycosylation. A helical transmembrane segment spans residues 236–256; sequence HTFWTITIGGTFTWLGVYGVN. The Cytoplasmic portion of the chain corresponds to 257 to 275; it reads QSTIQRCISCKTEKHAKLA. A helical membrane pass occupies residues 276-296; it reads LYFNLLGLWIIVACAVFSGLI. The Extracellular portion of the chain corresponds to 297 to 321; sequence MYSHFKDCDPWTSGVISAPDQLMPY. A helical transmembrane segment spans residues 322-342; sequence FVMEIFATMPGLPGLFVACAF. Residues 343 to 385 lie on the Cytoplasmic side of the membrane; the sequence is SGTLSTVAASINALATVTFEDFVKSCFPHLSDKLSTWISKGLC. Residues 386–406 form a helical membrane-spanning segment; it reads ILFGIMCTSMAVVASLMGSVV. The Extracellular segment spans residues 407 to 411; the sequence is QAALS. The chain crosses the membrane as a helical span at residues 412-432; sequence IHGMCGGPMLGLFTLGLVFPF. Residues 433 to 437 are Cytoplasmic-facing; it reads VNWKG. A helical membrane pass occupies residues 438–458; it reads ALGGLLTGITLSFWVAIGSFI. The Extracellular portion of the chain corresponds to 459 to 504; sequence YPAPESKTLPLPLSTEHCVELNITTTVAPQISSRPVLADTWYSLSY. The N-linked (GlcNAc...) asparagine glycan is linked to Asn-480. A helical membrane pass occupies residues 505 to 525; that stretch reads LYFSAVGCLGCIAAGIIISFL. Residues 526 to 619 are Cytoplasmic-facing; it reads TGKQRGKDID…NSVPEKTTYF (94 aa).

Belongs to the sodium:solute symporter (SSF) (TC 2.A.21) family. As to expression, expressed in the cortical region of the kidney corresponding to the proximal tubule. Expressed in Mueller cells of the inner retina (at protein level). Isoform 1 is expressed in the retina, kidney, small intestine and skeletal muscle. Isoform 2 is not detected in the kidney, small intestine and skeletal muscle. In the kidney, expressed predominantly in tubular epithelial cells of the cortical region and in the convoluted portions of the proximal tubule (pars convoluta). In the small intestine, its expression is highest in the proximal part and gradually decreased towards the distal end. Expressed in the neural retina. Not detected in the caecum and colon.

The protein localises to the apical cell membrane. It catalyses the reaction (S)-lactate(out) + Na(+)(out) = (S)-lactate(in) + Na(+)(in). It carries out the reaction nicotinate(out) + Na(+)(out) = nicotinate(in) + Na(+)(in). The catalysed reaction is pyruvate(out) + Na(+)(out) = pyruvate(in) + Na(+)(in). The enzyme catalyses propanoate(out) + Na(+)(out) = propanoate(in) + Na(+)(in). It catalyses the reaction butanoate(out) + Na(+)(out) = butanoate(in) + Na(+)(in). It carries out the reaction acetoacetate(out) + Na(+)(out) = acetoacetate(in) + Na(+)(in). Acts as an electroneutral and low-affinity sodium (Na(+))-dependent sodium-coupled solute transporter. Catalyzes the transport across the plasma membrane of many monocarboxylates such as lactate, pyruvate, nicotinate, propionate, butyrate and beta-D-hydroxybutyrate. May be responsible for the first step of reabsorption of monocarboxylates from the lumen of the proximal tubule of the kidney and the small intestine. May play also a role in monocarboxylates transport in the retina. Mediates electroneutral uptake of lactate, with a stoichiometry of 2 Na(+) for each lactate. The protein is Sodium-coupled monocarboxylate transporter 2 (Slc5a12) of Mus musculus (Mouse).